Consider the following 167-residue polypeptide: Putative N-acetylgalactosamine-6-phosphate deacetylase (167 aa).

This sequence belongs to the metallo-dependent hydrolases superfamily. NagA family.

It catalyses the reaction N-acetyl-D-galactosamine 6-phosphate + H2O = D-galactosamine 6-phosphate + acetate. This is Putative N-acetylgalactosamine-6-phosphate deacetylase (agaA) from Escherichia coli (strain K12).